The primary structure comprises 152 residues: MESWLFLLAILVVAWLGKNQSLQIATVVVLLIKLIPNTSKLLTTIGQKGINWGVTVITVAILIPIATGQIGFRDLWHAFKSPVGWIAVACGVLVSVLSFHGVGLLSATPEITVALVFGTIMGVVLLKGIAAGPIIAAGITYCIIQVLHLSLQ.

4 consecutive transmembrane segments (helical) span residues 25–45 (ATVV…LTTI), 52–72 (WGVT…QIGF), 85–105 (WIAV…VGLL), and 115–135 (LVFG…GPII).

It belongs to the UPF0756 family.

It localises to the cell membrane. The polypeptide is UPF0756 membrane protein JDM1_1594 (Lactiplantibacillus plantarum (strain JDM1) (Lactobacillus plantarum)).